The chain runs to 313 residues: Fructose-1,6-bisphosphatase class 1 (313 aa).

Glu-90, Asp-111, Leu-113, and Asp-114 together coordinate Mg(2+). Residues 114-117 (DGSS), Tyr-222, and Lys-253 contribute to the substrate site. Glu-259 provides a ligand contact to Mg(2+).

The protein belongs to the FBPase class 1 family. In terms of assembly, homotetramer. The cofactor is Mg(2+).

Its subcellular location is the cytoplasm. It carries out the reaction beta-D-fructose 1,6-bisphosphate + H2O = beta-D-fructose 6-phosphate + phosphate. It functions in the pathway carbohydrate biosynthesis; gluconeogenesis. This chain is Fructose-1,6-bisphosphatase class 1, found in Geotalea uraniireducens (strain Rf4) (Geobacter uraniireducens).